The primary structure comprises 208 residues: LexA repressor (208 aa).

Positions Val30–Ala50 form a DNA-binding region, H-T-H motif. Active-site for autocatalytic cleavage activity residues include Ser129 and Lys167.

The protein belongs to the peptidase S24 family. As to quaternary structure, homodimer.

The enzyme catalyses Hydrolysis of Ala-|-Gly bond in repressor LexA.. In terms of biological role, represses a number of genes involved in the response to DNA damage (SOS response), including recA and lexA. In the presence of single-stranded DNA, RecA interacts with LexA causing an autocatalytic cleavage which disrupts the DNA-binding part of LexA, leading to derepression of the SOS regulon and eventually DNA repair. This chain is LexA repressor, found in Lactobacillus helveticus (strain DPC 4571).